Here is a 180-residue protein sequence, read N- to C-terminus: SAGA-associated factor 11 homolog (180 aa).

The segment at 98–119 (CSCPNCNRIVAASRFAPHLEKC) adopts an SGF11-type zinc-finger fold. The disordered stretch occupies residues 138 to 180 (RDGGNYFGADEDDEDDADWSGEKRKKKIAPVRTNGSKKNGKTS). Residues 146 to 156 (ADEDDEDDADW) show a composition bias toward acidic residues.

The protein belongs to the SGF11 family. In terms of assembly, component of some SAGA transcription coactivator-HAT complexes. Within the SAGA complex, participates in a subcomplex of SAGA called the DUB module (deubiquitination module).

It localises to the nucleus. In terms of biological role, component of the transcription regulatory histone acetylation (HAT) complex SAGA, a multiprotein complex that activates transcription by remodeling chromatin and mediating histone acetylation and deubiquitination. Within the SAGA complex, participates in a subcomplex that specifically deubiquitinates histone H2B. The SAGA complex is recruited to specific gene promoters by activators, where it is required for transcription. The chain is SAGA-associated factor 11 homolog from Aedes aegypti (Yellowfever mosquito).